Consider the following 72-residue polypeptide: Cell division protein ZapB (72 aa).

Residues 1-71 are a coiled coil; the sequence is MSLEILDQLE…IRSLLGKFDN (71 aa).

This sequence belongs to the ZapB family. As to quaternary structure, homodimer. The ends of the coiled-coil dimer bind to each other, forming polymers. Interacts with FtsZ.

It localises to the cytoplasm. Its function is as follows. Non-essential, abundant cell division factor that is required for proper Z-ring formation. It is recruited early to the divisome by direct interaction with FtsZ, stimulating Z-ring assembly and thereby promoting cell division earlier in the cell cycle. Its recruitment to the Z-ring requires functional FtsA or ZipA. The sequence is that of Cell division protein ZapB from Haemophilus influenzae (strain 86-028NP).